Reading from the N-terminus, the 710-residue chain is Integrator complex subunit 10 (710 aa).

A phosphoserine mark is found at Ser231, Ser381, and Ser382. Residue Lys464 forms a Glycyl lysine isopeptide (Lys-Gly) (interchain with G-Cter in SUMO2) linkage.

The protein belongs to the Integrator subunit 10 family. As to quaternary structure, component of the Integrator complex, composed of core subunits INTS1, INTS2, INTS3, INTS4, INTS5, INTS6, INTS7, INTS8, INTS9/RC74, INTS10, INTS11/CPSF3L, INTS12, INTS13, INTS14 and INTS15. The core complex associates with protein phosphatase 2A subunits PPP2CA and PPP2R1A, to form the Integrator-PP2A (INTAC) complex. INTS10 is part of the tail subcomplex, composed of INTS10, INTS13, INTS14 and INTS15.

It is found in the nucleus. Functionally, component of the integrator complex, a multiprotein complex that terminates RNA polymerase II (Pol II) transcription in the promoter-proximal region of genes. The integrator complex provides a quality checkpoint during transcription elongation by driving premature transcription termination of transcripts that are unfavorably configured for transcriptional elongation: the complex terminates transcription by (1) catalyzing dephosphorylation of the C-terminal domain (CTD) of Pol II subunit POLR2A/RPB1 and SUPT5H/SPT5, (2) degrading the exiting nascent RNA transcript via endonuclease activity and (3) promoting the release of Pol II from bound DNA. The integrator complex is also involved in terminating the synthesis of non-coding Pol II transcripts, such as enhancer RNAs (eRNAs), small nuclear RNAs (snRNAs), telomerase RNAs and long non-coding RNAs (lncRNAs). Within the integrator complex, INTS10 is part of the integrator tail module that acts as a platform for the recruitment of transcription factors at promoters. May be not involved in the recruitment of cytoplasmic dynein to the nuclear envelope, probably as component of the integrator complex. In Homo sapiens (Human), this protein is Integrator complex subunit 10.